The following is a 284-amino-acid chain: 4-diphosphocytidyl-2-C-methyl-D-erythritol kinase (284 aa).

The active site involves Lys-14. 98-108 (PMGGGLGGGSS) lines the ATP pocket. Asp-140 is an active-site residue.

It belongs to the GHMP kinase family. IspE subfamily.

The enzyme catalyses 4-CDP-2-C-methyl-D-erythritol + ATP = 4-CDP-2-C-methyl-D-erythritol 2-phosphate + ADP + H(+). The protein operates within isoprenoid biosynthesis; isopentenyl diphosphate biosynthesis via DXP pathway; isopentenyl diphosphate from 1-deoxy-D-xylulose 5-phosphate: step 3/6. Its function is as follows. Catalyzes the phosphorylation of the position 2 hydroxy group of 4-diphosphocytidyl-2C-methyl-D-erythritol. In Shewanella sp. (strain MR-4), this protein is 4-diphosphocytidyl-2-C-methyl-D-erythritol kinase.